We begin with the raw amino-acid sequence, 220 residues long: Coat protein TP4 (220 aa).

The protein resides in the virion. This chain is Coat protein TP4, found in Thermoproteus tenax (TTV1).